Here is an 83-residue protein sequence, read N- to C-terminus: Translational regulator CsrA (83 aa).

This sequence belongs to the CsrA/RsmA family. In terms of assembly, homodimer; the beta-strands of each monomer intercalate to form a hydrophobic core, while the alpha-helices form wings that extend away from the core.

Its subcellular location is the cytoplasm. Functionally, a translational regulator that binds mRNA to regulate translation initiation and/or mRNA stability. Usually binds in the 5'-UTR at or near the Shine-Dalgarno sequence preventing ribosome-binding, thus repressing translation. Its main target seems to be the major flagellin gene, while its function is anatagonized by FliW. The protein is Translational regulator CsrA of Thermotoga maritima (strain ATCC 43589 / DSM 3109 / JCM 10099 / NBRC 100826 / MSB8).